Here is a 978-residue protein sequence, read N- to C-terminus: Monofunctional C1-tetrahydrofolate synthase, mitochondrial (978 aa).

Over residues Met-1–Arg-10 the composition is skewed to low complexity. The transit peptide at Met-1–Ala-31 directs the protein to the mitochondrion. The interval Met-1–Arg-71 is disordered. The segment at Ala-31–Leu-348 is methylenetetrahydrofolate dehydrogenase and cyclohydrolase. A compositionally biased stretch (gly residues) spans Ser-33 to Gly-45. At Lys-189 the chain carries N6-acetyllysine; alternate. Lys-189 is modified (N6-succinyllysine; alternate). Positions His-349–Phe-978 are formyltetrahydrofolate synthetase. Phosphoserine is present on Ser-357. ATP is bound at residue Thr-423–Ser-430. Residue Lys-596 is modified to N6-succinyllysine.

This sequence in the N-terminal section; belongs to the tetrahydrofolate dehydrogenase/cyclohydrolase family. The protein in the C-terminal section; belongs to the formate--tetrahydrofolate ligase family. Homodimer. Detected in most tissues, highest expression found in placenta, thymus and brain. Low expression is found in liver and skeletal muscle. Up-regulated in colon adenocarcinoma.

It localises to the mitochondrion. The enzyme catalyses (6S)-5,6,7,8-tetrahydrofolate + formate + ATP = (6R)-10-formyltetrahydrofolate + ADP + phosphate. It participates in one-carbon metabolism; tetrahydrofolate interconversion. May provide the missing metabolic reaction required to link the mitochondria and the cytoplasm in the mammalian model of one-carbon folate metabolism complementing thus the enzymatic activities of MTHFD2. The protein is Monofunctional C1-tetrahydrofolate synthase, mitochondrial of Homo sapiens (Human).